Reading from the N-terminus, the 361-residue chain is NAD-dependent protein deacetylase hst2-1 (361 aa).

The region spanning Ser16–Glu276 is the Deacetylase sirtuin-type domain. NAD(+) contacts are provided by residues Gly43–Tyr63 and Gln126–Asp129. Catalysis depends on His146, which acts as the Proton acceptor. Residues Cys154, Cys157, Cys178, and Cys181 each coordinate Zn(2+). NAD(+) is bound by residues Gly217–Ser219, Asn242–Glu244, and Cys262. A coiled-coil region spans residues Glu294–Tyr328. The interval Arg335–Arg361 is disordered.

It belongs to the sirtuin family. Class I subfamily. Zn(2+) serves as cofactor.

It localises to the cytoplasm. The protein localises to the nucleus. The enzyme catalyses N(6)-acetyl-L-lysyl-[protein] + NAD(+) + H2O = 2''-O-acetyl-ADP-D-ribose + nicotinamide + L-lysyl-[protein]. In terms of biological role, NAD-dependent histone deacetylase, which could function in telomeric silencing, cell cycle progression and chromosome stability. This is NAD-dependent protein deacetylase hst2-1 from Emericella nidulans (strain FGSC A4 / ATCC 38163 / CBS 112.46 / NRRL 194 / M139) (Aspergillus nidulans).